A 381-amino-acid chain; its full sequence is Probable tRNA sulfurtransferase (381 aa).

A THUMP domain is found at glutamate 57–isoleucine 160. ATP-binding positions include methionine 177–leucine 178, tyrosine 202–phenylalanine 203, arginine 259, glycine 281, and glutamine 290.

This sequence belongs to the ThiI family.

The protein resides in the cytoplasm. The enzyme catalyses [ThiI sulfur-carrier protein]-S-sulfanyl-L-cysteine + a uridine in tRNA + 2 reduced [2Fe-2S]-[ferredoxin] + ATP + H(+) = [ThiI sulfur-carrier protein]-L-cysteine + a 4-thiouridine in tRNA + 2 oxidized [2Fe-2S]-[ferredoxin] + AMP + diphosphate. The catalysed reaction is [ThiS sulfur-carrier protein]-C-terminal Gly-Gly-AMP + S-sulfanyl-L-cysteinyl-[cysteine desulfurase] + AH2 = [ThiS sulfur-carrier protein]-C-terminal-Gly-aminoethanethioate + L-cysteinyl-[cysteine desulfurase] + A + AMP + 2 H(+). It participates in cofactor biosynthesis; thiamine diphosphate biosynthesis. Catalyzes the ATP-dependent transfer of a sulfur to tRNA to produce 4-thiouridine in position 8 of tRNAs, which functions as a near-UV photosensor. Also catalyzes the transfer of sulfur to the sulfur carrier protein ThiS, forming ThiS-thiocarboxylate. This is a step in the synthesis of thiazole, in the thiamine biosynthesis pathway. The sulfur is donated as persulfide by IscS. The protein is Probable tRNA sulfurtransferase of Clostridium kluyveri (strain NBRC 12016).